Consider the following 96-residue polypeptide: DNA/RNA-binding protein Alba (96 aa).

Belongs to the histone-like Alba family.

It is found in the cytoplasm. It localises to the chromosome. Binds double-stranded DNA tightly but without sequence specificity. Involved in DNA compaction. This chain is DNA/RNA-binding protein Alba, found in Methanocella arvoryzae (strain DSM 22066 / NBRC 105507 / MRE50).